Consider the following 182-residue polypeptide: UPF0397 protein SPT_0523 (182 aa).

The next 5 helical transmembrane spans lie at 10–30, 46–66, 73–93, 109–129, and 148–168; these read VVAVGIGAALFVVIGMINIPT, LLSIIFGPIIGLLVGLIGHAI, YGLWWTWIIASGLFGLVVGLF, ILIFNLIQLLANALVWGVLAP, and IVAGIANGVSVAIAGTLLLLA.

This sequence belongs to the UPF0397 family.

It localises to the cell membrane. The protein is UPF0397 protein SPT_0523 of Streptococcus pneumoniae (strain Taiwan19F-14).